The following is a 401-amino-acid chain: 8-amino-7-oxononanoate synthase (401 aa).

Arg-24 lines the substrate pocket. 111 to 112 (GF) contributes to the pyridoxal 5'-phosphate binding site. His-137 contacts substrate. Positions 183, 211, and 240 each coordinate pyridoxal 5'-phosphate. Position 243 is an N6-(pyridoxal phosphate)lysine (Lys-243). Thr-357 contributes to the substrate binding site.

The protein belongs to the class-II pyridoxal-phosphate-dependent aminotransferase family. BioF subfamily. As to quaternary structure, homodimer. The cofactor is pyridoxal 5'-phosphate.

It carries out the reaction 6-carboxyhexanoyl-[ACP] + L-alanine + H(+) = (8S)-8-amino-7-oxononanoate + holo-[ACP] + CO2. It participates in cofactor biosynthesis; biotin biosynthesis. In terms of biological role, catalyzes the decarboxylative condensation of pimeloyl-[acyl-carrier protein] and L-alanine to produce 8-amino-7-oxononanoate (AON), [acyl-carrier protein], and carbon dioxide. This is 8-amino-7-oxononanoate synthase from Xanthomonas campestris pv. campestris (strain 8004).